The sequence spans 669 residues: Dymeclin (669 aa).

G2 is lipidated: N-myristoyl glycine.

The protein belongs to the dymeclin family. Post-translationally, myristoylated in vitro; myristoylation is not essential for protein targeting to Golgi compartment.

The protein localises to the cytoplasm. It is found in the golgi apparatus. Necessary for correct organization of Golgi apparatus. The chain is Dymeclin (dym) from Xenopus laevis (African clawed frog).